The chain runs to 82 residues: Conotoxin Gla-TxX (82 aa).

The N-terminal stretch at Met1 to Cys25 is a signal peptide. 5 positions are modified to 4-carboxyglutamate: Glu30, Glu34, Glu37, Glu40, and Glu41. At Asn72 the chain carries Asparagine amide. Positions Leu77–Lys82 are excised as a propeptide.

Post-translationally, contains 4 disulfide bonds. In terms of tissue distribution, expressed by the venom duct.

Its subcellular location is the secreted. The chain is Conotoxin Gla-TxX from Conus textile (Cloth-of-gold cone).